The following is a 351-amino-acid chain: Glycerol-1-phosphate dehydrogenase [NAD(P)+] (351 aa).

Residues 97–101 (GKTID) and 119–122 (TAPS) each bind NAD(+). D124 provides a ligand contact to substrate. S128 is a binding site for NAD(+). D171 lines the substrate pocket. Residues D171 and H251 each coordinate Zn(2+). A substrate-binding site is contributed by H255. H267 contacts Zn(2+).

It belongs to the glycerol-1-phosphate dehydrogenase family. In terms of assembly, homodimer. It depends on Zn(2+) as a cofactor.

It is found in the cytoplasm. It catalyses the reaction sn-glycerol 1-phosphate + NAD(+) = dihydroxyacetone phosphate + NADH + H(+). The enzyme catalyses sn-glycerol 1-phosphate + NADP(+) = dihydroxyacetone phosphate + NADPH + H(+). It functions in the pathway membrane lipid metabolism; glycerophospholipid metabolism. Functionally, catalyzes the NAD(P)H-dependent reduction of dihydroxyacetonephosphate (DHAP or glycerone phosphate) to glycerol 1-phosphate (G1P). The G1P thus generated is used as the glycerophosphate backbone of phospholipids in the cellular membranes of Archaea. In Metallosphaera sedula (strain ATCC 51363 / DSM 5348 / JCM 9185 / NBRC 15509 / TH2), this protein is Glycerol-1-phosphate dehydrogenase [NAD(P)+].